A 454-amino-acid polypeptide reads, in one-letter code: tRNA(Ile)-lysidine synthase (454 aa).

31–36 (SGGADS) provides a ligand contact to ATP.

This sequence belongs to the tRNA(Ile)-lysidine synthase family.

It localises to the cytoplasm. The enzyme catalyses cytidine(34) in tRNA(Ile2) + L-lysine + ATP = lysidine(34) in tRNA(Ile2) + AMP + diphosphate + H(+). Ligates lysine onto the cytidine present at position 34 of the AUA codon-specific tRNA(Ile) that contains the anticodon CAU, in an ATP-dependent manner. Cytidine is converted to lysidine, thus changing the amino acid specificity of the tRNA from methionine to isoleucine. In Porphyromonas gingivalis (strain ATCC 33277 / DSM 20709 / CIP 103683 / JCM 12257 / NCTC 11834 / 2561), this protein is tRNA(Ile)-lysidine synthase.